The chain runs to 747 residues: H(+)/Cl(-) exchange transporter 4 (747 aa).

The tract at residues 1-50 is required for localization in the endoplasmic reticulum; it reads MDFLEEPFPDVGTYEDFHTIDWLREKSRDTDRHRKITSKSKESIWEFIKS. At 1-54 the chain is on the cytoplasmic side; sequence MDFLEEPFPDVGTYEDFHTIDWLREKSRDTDRHRKITSKSKESIWEFIKSLLDA. Helical transmembrane passes span 55–92 and 138–161; these read WSGWVVMLLIGLLAGTLAGVIDLAVDWMTDLKEGVCLS and LNYLMYILWALLFAFLAVSLVRVF. Residues 167–171 carry the Selectivity filter part_1 motif; that stretch reads GSGIP. Position 168 (S168) interacts with chloride. An intramembrane region (helical) is located at residues 170–177; sequence IPEIKTIL. A run of 2 helical transmembrane segments spans residues 187–205 and 211–230; these read GKWTLLIKTVTLVLVVSSG and EGPLVHVACCCGNFFSSLFS. The Selectivity filter part_2 motif lies at 209-213; sequence GKEGP. Intramembrane regions (helical) lie at residues 242-254 and 258-266; these read VLSAAAAAGVSVA and PIGGVLFSL. The next 5 membrane-spanning stretches (helical) occupy residues 278-296, 320-345, 352-372, 429-449, and 454-473; these read LWRSFFAALVAAFTLRSIN, FPFILLGVFGGLWGTLFTRCNIAWCR, LGRYPVLEVIAVTAVTAIVAY, MWQLALALIFKIVITIFTFGM, and GLFIPSMAVGAMAGRMVGIG. A Selectivity filter part_3 motif is present at residues 454 to 458; the sequence is GLFIP. Position 456 (F456) interacts with chloride. 2 intramembrane regions (helical) span residues 501-515 and 519-530; these read GLYAMVGAAACLGGV and TVSLVVIMFELT. An intramembrane region (note=Loop between two helices) is located at residues 531–534; the sequence is GGLE. A helical transmembrane segment spans residues 535-553; sequence YIVPLMAAAVTSKWVADAF. The Cytoplasmic portion of the chain corresponds to 554-747; it reads GKEGIYEAHI…NQDPESIMFN (194 aa). Residue Y559 participates in chloride binding. CBS domains follow at residues 587–653 and 680–742; these read MRPR…QRQE and LRRI…QDPE. Residues S597 and 618-620 contribute to the ATP site; that span reads YNG. The required for localization in the endoplasmic reticulum stretch occupies residues 654–683; sequence GIVSNSIMYFTEEPPELPANSPHPLKLRRI. Residue 725-728 coordinates ATP; sequence TKKD.

The protein belongs to the chloride channel (TC 2.A.49) family. ClC-4/CLCN4 subfamily. Predominantly present in excitable tissues such as nervous system and skeletal muscle. Not detected in heart.

It localises to the early endosome membrane. The protein localises to the late endosome membrane. The protein resides in the endoplasmic reticulum membrane. It is found in the lysosome membrane. Its subcellular location is the recycling endosome membrane. Functionally, strongly outwardly rectifying, electrogenic H(+)/Cl(-)exchanger which mediates the exchange of chloride ions against protons. The CLC channel family contains both chloride channels and proton-coupled anion transporters that exchange chloride or another anion for protons. The presence of conserved gating glutamate residues is typical for family members that function as antiporters. The polypeptide is H(+)/Cl(-) exchange transporter 4 (Clcn4) (Mus musculus (Mouse)).